A 296-amino-acid chain; its full sequence is Beta-lactamase (296 aa).

An N-terminal signal peptide occupies residues 1 to 21 (MKAYFIAILTLFTCIATVVRA). Catalysis depends on S66, which acts as the Acyl-ester intermediate. Position 235–237 (235–237 (KTG)) interacts with substrate.

This sequence belongs to the class-A beta-lactamase family.

It carries out the reaction a beta-lactam + H2O = a substituted beta-amino acid. The protein is Beta-lactamase (cblA) of Bacteroides uniformis.